A 402-amino-acid chain; its full sequence is Propionate kinase (402 aa).

ATP is bound by residues Asn-11 and Lys-18. Asn-11 provides a ligand contact to Mg(2+). Arg-86 lines the substrate pocket. The active-site Proton donor/acceptor is Asp-143. ATP-binding positions include His-175, 203 to 207 (HLGNG), 278 to 280 (DLR), and 326 to 330 (GIGEN).

It belongs to the acetokinase family. TdcD subfamily. Homodimer. Requires Mg(2+) as cofactor.

The enzyme catalyses propanoate + ATP = propanoyl phosphate + ADP. Its pathway is amino-acid degradation; L-threonine degradation via propanoate pathway; propanoate from L-threonine: step 4/4. Catalyzes the conversion of propionyl phosphate and ADP to propionate and ATP. In Escherichia coli O157:H7, this protein is Propionate kinase.